A 384-amino-acid polypeptide reads, in one-letter code: NADH-quinone oxidoreductase subunit D 2 (384 aa).

This sequence belongs to the complex I 49 kDa subunit family. In terms of assembly, NDH-1 is composed of 14 different subunits. Subunits NuoB, C, D, E, F, and G constitute the peripheral sector of the complex.

The protein localises to the cell membrane. It catalyses the reaction a quinone + NADH + 5 H(+)(in) = a quinol + NAD(+) + 4 H(+)(out). NDH-1 shuttles electrons from NADH, via FMN and iron-sulfur (Fe-S) centers, to quinones in the respiratory chain. The immediate electron acceptor for the enzyme in this species is believed to be a menaquinone. Couples the redox reaction to proton translocation (for every two electrons transferred, four hydrogen ions are translocated across the cytoplasmic membrane), and thus conserves the redox energy in a proton gradient. This chain is NADH-quinone oxidoreductase subunit D 2, found in Symbiobacterium thermophilum (strain DSM 24528 / JCM 14929 / IAM 14863 / T).